The sequence spans 205 residues: NADH-quinone oxidoreductase subunit J (205 aa).

Helical transmembrane passes span 1 to 21 (MPIF…CVVL), 26 to 46 (VYSV…MILL), 54 to 74 (LLIV…IMML), 89 to 109 (LSLS…TIIL), and 142 to 162 (FMLP…SCIT).

The protein belongs to the complex I subunit 6 family.

It is found in the cell membrane. It carries out the reaction a quinone + NADH + 5 H(+)(in) = a quinol + NAD(+) + 4 H(+)(out). Its function is as follows. NDH-1 shuttles electrons from NADH, via FMN and iron-sulfur (Fe-S) centers, to quinones in the respiratory chain. Couples the redox reaction to proton translocation (for every two electrons transferred, four hydrogen ions are translocated across the cytoplasmic membrane), and thus conserves the redox energy in a proton gradient. The protein is NADH-quinone oxidoreductase subunit J (nuoJ) of Rickettsia prowazekii (strain Madrid E).